A 446-amino-acid polypeptide reads, in one-letter code: Putative hydrolase YbfO (446 aa).

An N-terminal signal peptide occupies residues Met-1–Ala-28.

The polypeptide is Putative hydrolase YbfO (ybfO) (Bacillus subtilis (strain 168)).